The primary structure comprises 358 residues: Membrane-bound lytic murein transglycosylase C (358 aa).

A signal peptide spans 1–16 (MKKILALLVIAPLLVS). Residue Cys-17 is the site of N-palmitoyl cysteine attachment. Cys-17 is lipidated: S-diacylglycerol cysteine.

It belongs to the transglycosylase Slt family.

Its subcellular location is the cell outer membrane. It carries out the reaction Exolytic cleavage of the (1-&gt;4)-beta-glycosidic linkage between N-acetylmuramic acid (MurNAc) and N-acetylglucosamine (GlcNAc) residues in peptidoglycan, from either the reducing or the non-reducing ends of the peptidoglycan chains, with concomitant formation of a 1,6-anhydrobond in the MurNAc residue.. Murein-degrading enzyme. May play a role in recycling of muropeptides during cell elongation and/or cell division. In Yersinia pseudotuberculosis serotype O:1b (strain IP 31758), this protein is Membrane-bound lytic murein transglycosylase C.